The primary structure comprises 560 residues: Beta-hexosaminidase subunit B1 (560 aa).

An N-terminal signal peptide occupies residues 1–25; sequence MIILKRNIVFLLIIIIVLGIFIATS. Residues Asn-59, Asn-69, Asn-81, Asn-99, Asn-161, Asn-293, and Asn-346 are each glycosylated (N-linked (GlcNAc...) asparagine). Residue Glu-359 is the Proton donor of the active site. Residues Asn-366, Asn-436, Asn-472, and Asn-547 are each glycosylated (N-linked (GlcNAc...) asparagine).

It belongs to the glycosyl hydrolase 20 family.

The protein localises to the lysosome. The catalysed reaction is Hydrolysis of terminal non-reducing N-acetyl-D-hexosamine residues in N-acetyl-beta-D-hexosaminides.. Responsible for the degradation of GM2 gangliosides, and a variety of other molecules containing terminal N-acetyl hexosamines. The chain is Beta-hexosaminidase subunit B1 (hexb1) from Dictyostelium discoideum (Social amoeba).